We begin with the raw amino-acid sequence, 464 residues long: Argininosuccinate lyase (464 aa).

The protein belongs to the lyase 1 family. Argininosuccinate lyase subfamily.

Its subcellular location is the cytoplasm. The enzyme catalyses 2-(N(omega)-L-arginino)succinate = fumarate + L-arginine. It functions in the pathway amino-acid biosynthesis; L-arginine biosynthesis; L-arginine from L-ornithine and carbamoyl phosphate: step 3/3. The polypeptide is Argininosuccinate lyase (Chlorobium phaeobacteroides (strain DSM 266 / SMG 266 / 2430)).